The chain runs to 654 residues: Broad substrate specificity ATP-binding cassette transporter ABCG2 (654 aa).

Topologically, residues 1 to 394 (MSSSNVEVFI…KNLLGNPQAS (394 aa)) are cytoplasmic. The ABC transporter domain maps to 37 to 286 (LSFHNICYRV…FESAGYHCEA (250 aa)). Residues 80–87 (GPTGGGKS), 184–190 (RGVSGGE), E211, and H243 contribute to the ATP site. The ABC transmembrane type-2 domain maps to 388–650 (LGNPQASIAQ…TIAYLKLLFL (263 aa)). Residues 395-415 (IAQIIVTVILGLVIGAIYFGL) traverse the membrane as a helical segment. At 416 to 427 (NNDSTGIQNRAG) the chain is on the extracellular side. N417 carries N-linked (GlcNAc...) asparagine glycosylation. Residues 428 to 448 (VLFFLTTNQCFSSVSAVELFV) traverse the membrane as a helical segment. Over 449–476 (VEKKLFIHEYISGYYRVSSYFFGKLLSD) the chain is Cytoplasmic. A helical membrane pass occupies residues 477–497 (LLPMRMLPSIIFTCIVYFMLG). Over 498–505 (LKPTADAF) the chain is Extracellular. Residues 506 to 526 (FIMMFTLMMVAYSASSMALAI) form a helical membrane-spanning segment. Topologically, residues 527–534 (AAGQSVVS) are cytoplasmic. Residues 535-555 (VATLLMTICFVFMMIFSGLLV) form a helical membrane-spanning segment. N556, N595, and N599 each carry an N-linked (GlcNAc...) asparagine glycan. Topologically, residues 556–629 (NLTTIASWLS…LSPWGLWKNH (74 aa)) are extracellular. C591 and C607 form a disulfide bridge. Residues 630-650 (VALACMIVIFLTIAYLKLLFL) traverse the membrane as a helical segment. Residues 651–654 (KKYS) are Cytoplasmic-facing.

This sequence belongs to the ABC transporter superfamily. ABCG family. Eye pigment precursor importer (TC 3.A.1.204) subfamily. As to quaternary structure, homodimer; disulfide-linked. The minimal functional unit is a homodimer, but the major oligomeric form in plasma membrane is a homotetramer with possibility of higher order oligomerization up to homododecamers. In terms of processing, N-glycosylated. Glycosylation-deficient ABCG2 is normally expressed and functional. Post-translationally, phosphorylated. Phosphorylation may regulate the localization to the plasma membrane, the homooligomerization and therefore, the activity of the transporter.

It is found in the cell membrane. Its subcellular location is the apical cell membrane. The protein localises to the mitochondrion membrane. It catalyses the reaction ATP + H2O + xenobioticSide 1 = ADP + phosphate + xenobioticSide 2.. The enzyme catalyses urate(in) + ATP + H2O = urate(out) + ADP + phosphate + H(+). It carries out the reaction indoxyl sulfate(in) + ATP + H2O = indoxyl sulfate(out) + ADP + phosphate + H(+). The catalysed reaction is sphing-4-enine 1-phosphate(in) + ATP + H2O = sphing-4-enine 1-phosphate(out) + ADP + phosphate + H(+). It catalyses the reaction estrone 3-sulfate(in) + ATP + H2O = estrone 3-sulfate(out) + ADP + phosphate + H(+). The enzyme catalyses dehydroepiandrosterone 3-sulfate(in) + ATP + H2O = dehydroepiandrosterone 3-sulfate(out) + ADP + phosphate + H(+). It carries out the reaction 4-methylumbelliferone sulfate(in) + ATP + H2O = 4-methylumbelliferone sulfate(out) + ADP + phosphate + H(+). The catalysed reaction is 5,7-dimethyl-2-methylamino-4-(3-pyridylmethyl)-1,3-benzothiazol-6-yl beta-D-glucuronate(in) + ATP + H2O = 5,7-dimethyl-2-methylamino-4-(3-pyridylmethyl)-1,3-benzothiazol-6-yl beta-D-glucuronate(out) + ADP + phosphate + H(+). It catalyses the reaction 4-methylumbelliferone beta-D-glucuronate(in) + ATP + H2O = 4-methylumbelliferone beta-D-glucuronate(out) + ADP + phosphate + H(+). The enzyme catalyses 5,7-dimethyl-2-methylamino-4-(3-pyridylmethyl)-1,3-benzothiazol-6-yl sulfate(in) + ATP + H2O = 5,7-dimethyl-2-methylamino-4-(3-pyridylmethyl)-1,3-benzothiazol-6-yl sulfate(out) + ADP + phosphate + H(+). It carries out the reaction 17beta-estradiol 17-O-(beta-D-glucuronate)(in) + ATP + H2O = 17beta-estradiol 17-O-(beta-D-glucuronate)(out) + ADP + phosphate + H(+). The catalysed reaction is methotrexate(in) + ATP + H2O = methotrexate(out) + ADP + phosphate + H(+). It catalyses the reaction riboflavin(in) + ATP + H2O = riboflavin(out) + ADP + phosphate + H(+). The enzyme catalyses pheophorbide a(in) + ATP + H2O = pheophorbide a(out) + ADP + phosphate + H(+). It carries out the reaction itaconate(in) + ATP + H2O = itaconate(out) + ADP + phosphate + H(+). Functionally, broad substrate specificity ATP-dependent transporter of the ATP-binding cassette (ABC) family that actively extrudes a wide variety of physiological compounds, dietary toxins and xenobiotics from cells. Involved in porphyrin homeostasis, mediating the export of protoporphyrin IX (PPIX) from both mitochondria to cytosol and cytosol to extracellular space, it also functions in the cellular export of heme. Also mediates the efflux of sphingosine-1-P from cells. Acts as a urate exporter functioning in both renal and extrarenal urate excretion. In kidney, it also functions as a physiological exporter of the uremic toxin indoxyl sulfate. Also involved in the excretion of steroids like estrone 3-sulfate/E1S, 3beta-sulfooxy-androst-5-en-17-one/DHEAS, and other sulfate conjugates. Mediates the secretion of the riboflavin and biotin vitamins into milk. Extrudes pheophorbide a, a phototoxic porphyrin catabolite of chlorophyll, reducing its bioavailability. Plays an important role in the exclusion of xenobiotics from the brain. It confers to cells a resistance to multiple drugs and other xenobiotics including mitoxantrone, pheophorbide, camptothecin, methotrexate, azidothymidine, and the anthracyclines daunorubicin and doxorubicin, through the control of their efflux. In placenta, it limits the penetration of drugs from the maternal plasma into the fetus. May play a role in early stem cell self-renewal by blocking differentiation. In inflammatory macrophages, exports itaconate from the cytosol to the extracellular compartment and limits the activation of TFEB-dependent lysosome biogenesis involved in antibacterial innate immune response. This is Broad substrate specificity ATP-binding cassette transporter ABCG2 (ABCG2) from Macaca mulatta (Rhesus macaque).